The chain runs to 149 residues: Arginine repressor (149 aa).

The protein belongs to the ArgR family.

The protein resides in the cytoplasm. Its pathway is amino-acid biosynthesis; L-arginine biosynthesis [regulation]. The protein operates within amino-acid degradation; L-arginine degradation via ADI pathway. Regulates arginine biosynthesis genes and activates arginine deiminase pathway genes. The protein is Arginine repressor (argR) of Bacillus licheniformis (strain ATCC 14580 / DSM 13 / JCM 2505 / CCUG 7422 / NBRC 12200 / NCIMB 9375 / NCTC 10341 / NRRL NRS-1264 / Gibson 46).